We begin with the raw amino-acid sequence, 210 residues long: MADAKELKQVLTGPIINNNPIALQILGVCSALAVTSKLETALVMTIALTAVTAFSNLFISLIRNHIPSSVRIIVQMTIIASLVIVVDQVLQAYAYAISKQLSVFVGLIITNCIVMGRAEAYAMKTPPMMSFMDGIGNGLGYGAILLSVGVVRELFGNGSLFGVEILSKISDGGWYQPNGLLLLPPSAFFLIGGLIWLIRTYKPEQVEAKG.

The next 6 helical transmembrane spans lie at 14-34, 42-62, 72-92, 96-116, 131-151, and 178-198; these read PIIN…ALAV, LVMT…ISLI, IIVQ…VLQA, AISK…IVMG, FMDG…VGVV, and NGLL…IWLI.

The protein belongs to the NqrDE/RnfAE family. As to quaternary structure, composed of six subunits; NqrA, NqrB, NqrC, NqrD, NqrE and NqrF.

The protein resides in the cell inner membrane. It carries out the reaction a ubiquinone + n Na(+)(in) + NADH + H(+) = a ubiquinol + n Na(+)(out) + NAD(+). Functionally, NQR complex catalyzes the reduction of ubiquinone-1 to ubiquinol by two successive reactions, coupled with the transport of Na(+) ions from the cytoplasm to the periplasm. NqrA to NqrE are probably involved in the second step, the conversion of ubisemiquinone to ubiquinol. This is Na(+)-translocating NADH-quinone reductase subunit D from Shewanella frigidimarina (strain NCIMB 400).